Here is a 456-residue protein sequence, read N- to C-terminus: Probable hexose phosphate transport protein (456 aa).

11 helical membrane passes run 34 to 54 (IFYSMFLGYVFFYFTRKSFTF), 70 to 90 (LGIIGSTLYITYGISKFVSGV), 113 to 133 (IFFGLSSTIPLFVLFWGINGW), 161 to 181 (VWSTSHNIGGALIPVLTGVAI), 185 to 205 (GWRGAMFIPGIICIIMGFILI), 257 to 277 (YVLSNKWLWFLSFASFFIYVV), 302 to 322 (LCVSLFEIGGLFGMLLAGWLS), 331 to 351 (GPMNVVFSLGLLVSILGLWGT), 363 to 383 (FLFIIGFFLFGPQMMIGLAAA), 394 to 414 (ASGFTGWFAYFGAAFAGYPLG), and 421 to 441 (GWHGFFVALLACALIALILFL).

Belongs to the major facilitator superfamily. Organophosphate:Pi antiporter (OPA) (TC 2.A.1.4) family.

It is found in the cell membrane. In terms of biological role, transport protein for sugar phosphate uptake. The polypeptide is Probable hexose phosphate transport protein (Chlamydia trachomatis serovar D (strain ATCC VR-885 / DSM 19411 / UW-3/Cx)).